Reading from the N-terminus, the 213-residue chain is Ras-related protein Rab-39B (213 aa).

GTP is bound by residues Ser17, Gly20, Lys21, Ser22, Cys23, Ser37, and Thr40. Ser22 lines the Mg(2+) pocket. Residues Gln35–Val43 form a switch-I region. Mg(2+) is bound by residues Thr40 and Asp64. GTP is bound by residues Gly67, His123, Lys124, Asp126, Ala154, and Arg155. The segment at Gly67 to Val83 is switch-II. Ser201 is modified (phosphoserine). S-geranylgeranyl cysteine attachment occurs at residues Cys211 and Cys213. Cys213 carries the post-translational modification Cysteine methyl ester.

The protein belongs to the small GTPase superfamily. Rab family. In terms of assembly, interacts (GDP-bound) with C9orf72; C9orf72 in complex with SMCR8 acts as a GEF for RAB39B. Interacts (in GTP-bound form) with PICK1 (via PDZ domain); a PICK1 homodimer may allow simultaneous association of RAB39B and GRIA2 to PICK1 which is involved in GRIA2 trafficking. Interacts with isoform c of RASSF1; the interaction is strong. Interacts with isoform a of RASSF1; the interaction is weak. Interacts with the DLG4/PSD-95. Interacts (GTP-bound) with HOPS complex components VPS39 and VPS41. Mg(2+) is required as a cofactor. Specifically expressed in neuron and neuronal precursors in the brain. Expression is high in all regions of the brain with highest levels observed in the hippocampus.

Its subcellular location is the cell membrane. The protein resides in the cytoplasmic vesicle membrane. It localises to the golgi apparatus. It is found in the cytoplasmic vesicle. The protein localises to the autophagosome membrane. Its subcellular location is the autolysosome membrane. The catalysed reaction is GTP + H2O = GDP + phosphate + H(+). With respect to regulation, regulated by guanine nucleotide exchange factors (GEFs) including C9orf72-SMCR8 complex, which promote the exchange of bound GDP for free GTP. Regulated by GTPase activating proteins (GAPs) which increase the GTP hydrolysis activity. Inhibited by GDP dissociation inhibitors (GDIs). Its function is as follows. The small GTPases Rab are key regulators of intracellular membrane trafficking, from the formation of transport vesicles to their fusion with membranes. Rabs cycle between an inactive GDP-bound form and an active GTP-bound form that is able to recruit to membranes different sets of downstream effectors directly responsible for vesicle formation, movement, tethering and fusion. RAB39B is involved in autophagy and may function in autophagosome formation. Binds downstream effector PICK1 to ensure selectively GRIA2 exit from the endoplasmic reticulum to the Golgi and to regulate AMPAR composition at the post-synapses and thus synaptic transmission. May regulate the homeostasis of SNCA/alpha-synuclein. The polypeptide is Ras-related protein Rab-39B (Mus musculus (Mouse)).